Here is a 349-residue protein sequence, read N- to C-terminus: Acyl-CoA Delta(11) desaturase (349 aa).

2 consecutive transmembrane segments (helical) span residues F41 to S61 and T66 to H86. Residues H86 to H91 carry the Histidine box-1 motif. The Histidine box-2 signature appears at H123–H127. A helical membrane pass occupies residues A184–W204. A Histidine box-3 motif is present at residues H263–H267. A helical membrane pass occupies residues F282–L302.

Belongs to the fatty acid desaturase type 1 family. The cofactor is Fe cation. As to expression, adult female pheromone gland. Increases by two or three orders of magnitude during the first 2 days after adult eclosion.

It localises to the endoplasmic reticulum membrane. The catalysed reaction is an 11,12-saturated fatty acyl-CoA + 2 Fe(II)-[cytochrome b5] + O2 + 2 H(+) = an (11Z)-Delta(11)-fatty acyl-CoA + 2 Fe(III)-[cytochrome b5] + 2 H2O. In terms of biological role, catalyzes the formation of Delta(11) fatty acyl precursors in the pheromone gland. This chain is Acyl-CoA Delta(11) desaturase (D11DS), found in Trichoplusia ni (Cabbage looper).